A 102-amino-acid chain; its full sequence is Large ribosomal subunit protein bL21 (102 aa).

It belongs to the bacterial ribosomal protein bL21 family. Part of the 50S ribosomal subunit. Contacts protein L20.

Its function is as follows. This protein binds to 23S rRNA in the presence of protein L20. The sequence is that of Large ribosomal subunit protein bL21 from Listeria monocytogenes serotype 4b (strain F2365).